The sequence spans 156 residues: Ribosome maturation factor RimP (156 aa).

This sequence belongs to the RimP family.

It localises to the cytoplasm. Required for maturation of 30S ribosomal subunits. The sequence is that of Ribosome maturation factor RimP from Bacillus cereus (strain B4264).